Here is a 443-residue protein sequence, read N- to C-terminus: NADH-quinone oxidoreductase subunit D 1 (443 aa).

This sequence belongs to the complex I 49 kDa subunit family. As to quaternary structure, NDH-1 is composed of 14 different subunits. Subunits NuoB, C, D, E, F, and G constitute the peripheral sector of the complex.

It is found in the cell membrane. The enzyme catalyses a quinone + NADH + 5 H(+)(in) = a quinol + NAD(+) + 4 H(+)(out). Its function is as follows. NDH-1 shuttles electrons from NADH, via FMN and iron-sulfur (Fe-S) centers, to quinones in the respiratory chain. The immediate electron acceptor for the enzyme in this species is believed to be a menaquinone. Couples the redox reaction to proton translocation (for every two electrons transferred, four hydrogen ions are translocated across the cytoplasmic membrane), and thus conserves the redox energy in a proton gradient. The sequence is that of NADH-quinone oxidoreductase subunit D 1 from Streptomyces avermitilis (strain ATCC 31267 / DSM 46492 / JCM 5070 / NBRC 14893 / NCIMB 12804 / NRRL 8165 / MA-4680).